A 330-amino-acid chain; its full sequence is 7,8-didemethyl-8-hydroxy-5-deazariboflavin synthase (330 aa).

One can recognise a Radical SAM core domain in the interval 5–245 (VTFSRNVFIP…SDVAVQVAPN (241 aa)). 3 residues coordinate [4Fe-4S] cluster: Cys19, Cys23, and Cys26.

The protein belongs to the radical SAM superfamily. CofG family. As to quaternary structure, consists of two subunits, CofG and CofH. It depends on [4Fe-4S] cluster as a cofactor.

The catalysed reaction is 5-amino-5-(4-hydroxybenzyl)-6-(D-ribitylimino)-5,6-dihydrouracil + S-adenosyl-L-methionine = 7,8-didemethyl-8-hydroxy-5-deazariboflavin + 5'-deoxyadenosine + L-methionine + NH4(+) + H(+). It functions in the pathway cofactor biosynthesis; coenzyme F0 biosynthesis. In terms of biological role, catalyzes the radical-mediated synthesis of 7,8-didemethyl-8-hydroxy-5-deazariboflavin from 5-amino-5-(4-hydroxybenzyl)-6-(D-ribitylimino)-5,6-dihydrouracil. The chain is 7,8-didemethyl-8-hydroxy-5-deazariboflavin synthase from Methanococcoides burtonii (strain DSM 6242 / NBRC 107633 / OCM 468 / ACE-M).